The following is a 344-amino-acid chain: Lipase chaperone (344 aa).

The helical transmembrane segment at 13-35 (RIAPYGAAGLAAIVGVAIWSGTG) threads the bilayer.

The protein belongs to the lipase chaperone family.

It localises to the cell inner membrane. May be involved in the folding of the extracellular lipase during its passage through the periplasm. In Burkholderia vietnamiensis (strain G4 / LMG 22486) (Burkholderia cepacia (strain R1808)), this protein is Lipase chaperone.